A 218-amino-acid chain; its full sequence is Octanoyltransferase (218 aa).

The BPL/LPL catalytic domain maps to threonine 27–alanine 210. Substrate contacts are provided by residues arginine 72 to histidine 79, serine 139 to glycine 141, and glycine 152 to alanine 154. Cysteine 170 acts as the Acyl-thioester intermediate in catalysis.

The protein belongs to the LipB family.

The protein localises to the cytoplasm. It carries out the reaction octanoyl-[ACP] + L-lysyl-[protein] = N(6)-octanoyl-L-lysyl-[protein] + holo-[ACP] + H(+). It participates in protein modification; protein lipoylation via endogenous pathway; protein N(6)-(lipoyl)lysine from octanoyl-[acyl-carrier-protein]: step 1/2. In terms of biological role, catalyzes the transfer of endogenously produced octanoic acid from octanoyl-acyl-carrier-protein onto the lipoyl domains of lipoate-dependent enzymes. Lipoyl-ACP can also act as a substrate although octanoyl-ACP is likely to be the physiological substrate. This Nitratidesulfovibrio vulgaris (strain ATCC 29579 / DSM 644 / CCUG 34227 / NCIMB 8303 / VKM B-1760 / Hildenborough) (Desulfovibrio vulgaris) protein is Octanoyltransferase.